Here is a 153-residue protein sequence, read N- to C-terminus: Cytochrome c-type biogenesis protein CcmE (153 aa).

The Cytoplasmic segment spans residues 1–8 (MTPVQRRR). Residues 9–29 (LVWVLLALLASGLATALVAMA) form a helical; Signal-anchor for type II membrane protein membrane-spanning segment. The Periplasmic segment spans residues 30–153 (LERNIAYLYT…DVPVTAPEVR (124 aa)). 2 residues coordinate heme: His123 and Tyr127.

The protein belongs to the CcmE/CycJ family.

The protein resides in the cell inner membrane. Functionally, heme chaperone required for the biogenesis of c-type cytochromes. Transiently binds heme delivered by CcmC and transfers the heme to apo-cytochromes in a process facilitated by CcmF and CcmH. This chain is Cytochrome c-type biogenesis protein CcmE, found in Stenotrophomonas maltophilia (strain R551-3).